The sequence spans 88 residues: Apolipoprotein C-I (88 aa).

Residues 1–26 form the signal peptide; sequence MRLFISLPILIVVLAMALEGPAPAQA.

It belongs to the apolipoprotein C1 family.

Its subcellular location is the secreted. In terms of biological role, inhibitor of lipoprotein binding to the low density lipoprotein (LDL) receptor, LDL receptor-related protein, and very low density lipoprotein (VLDL) receptor. Associates with high density lipoproteins (HDL) and the triacylglycerol-rich lipoproteins in the plasma and makes up about 10% of the protein of the VLDL and 2% of that of HDL. Appears to interfere directly with fatty acid uptake and is also the major plasma inhibitor of cholesteryl ester transfer protein (CETP). Modulates the interaction of APOE with beta-migrating VLDL and inhibits binding of beta-VLDL to the LDL receptor-related protein. Binds free fatty acids and reduces their intracellular esterification. The chain is Apolipoprotein C-I (Apoc1) from Neotoma lepida (Desert woodrat).